A 2098-amino-acid chain; its full sequence is MATDDKTSPTLDSANDLPRSPTSPSHLTHFKPLTPDQDEPPFKSAYSSFVNLFRFNKERAEGGQGEQQPLSGSWTSPQLPSRTQSVRSPTPYKKQLNEELQRRSSALDTRRKAEPTFGGHDPRTAVQLRSLSTVLKRLKEIMEGKSQDSDLKQYWMPDSQCKECYDCSEKFTTFRRRHHCRLCGQIFCSRCCNQEIPGKFMGYTGDLRACTYCRKIALSYAHSTDSNSIGEDLNALSDSACSVSVLDPSEPRTPVGSRKASRNIFLEDDLAWQSLIHPDSSNTPLSTRLVSVQEDAGKSPARNRSASITNLSLDRSGSPMVPSYETSVSPQANRTYVRTETTEDERKILLDSVQLKDLWKKICHHSSGMEFQDHRYWLRTHPNCIVGKELVNWLIRNGHIATRAQAIAIGQAMVDGRWLDCVSHHDQLFRDEYALYRPLQSTEFSETPSPDSDSVNSVEGHSEPSWFKDIKFDDSDTEQIAEEGDDNLANSASPSKRTSVSSFQSTVDSDSAASISLNVELDNVNFHIKKPSKYPHVPPHPADQKEYLISDTGGQQLSISDAFIKESLFNRRVEEKSKELPFTPLGWHHNNLELLREENGEKQAMERLLSANHNHMMALLQQLLHSDSLSSSWRDIIVSLVCQVVQTVRPDVKNQDDDMDIRQFVHIKKIPGGKKFDSVVVNGFVCTKNIAHKKMSSCIKNPKILLLKCSIEYLYREETKFTCIDPIVLQEREFLKNYVQRIVDVRPTLVLVEKTVSRIAQDMLLEHGITLVINVKSQVLERISRMTQGDLVMSMDQLLTKPHLGTCHKFYMQIFQLPNEQTKTLMFFEGCPQHLGCTIKLRGGSDYELARVKEILIFMICVAYHSQLEISFLMDEFAMPPTLMQNPSFHSLIEGRGHEGAVQEQYGGGSIPWDPDIPPESLPCDDSSLLELRIVFEKGEQENKNLPQAVASVKHQEHSTTACPAGLPCAFFAPVPESLLPLPVDDQQDALGSEQPETLQQTVVLQDPKSQIRAFRDPLQDDTGLYVTEEVTSSEDKRKTYSLAFKQELKDVILCISPVITFREPFLLTEKGMRCSTRDYFAEQVYWSPLLNKEFKEMENRRKKQLLRDLSGLQGMNGSIQAKSIQVLPSHELVSTRIAEHLGDSQSLGRMLADYRARGGRIQPKNSDPFAHSKDASSTSSGQSGSKNEGDEERGLILSDAVWSTKVDCLNPINHQRLCVLFSSSSAQSSNAPSACVSPWIVTMEFYGKNDLTLGIFLERYCFRPSYQCPSMFCDTPMVHHIRRFVHGQGCVQIILKELDSPVPGYQHTILTYSWCRICKQVTPVVALSNESWSMSFAKYLELRFYGHQYTRRANAEPCGHSIHHDYHQYFSYNQMVASFSYSPIRLLEVCVPLPKIFIKRQAPLKVSLLQDLKDFFQKVSQVYVAIDERLASLKTDTFSKTREEKMEDIFAQKEMEEGEFKNWIEKMQARLMSSSVDTPQQLQSVFESLIAKKQSLCEVLQAWNNRLQDLFQQEKGRKRPSVPPSPGRLRQGEESKISAMDASPRNISPGLQNGEKEDRFLTTLSSQSSTSSTHLQLPTPPEVMSEQSVGGPPELDTASSSEDVFDGHLLGSTDSQVKEKSTMKAIFANLLPGNSYNPIPFPFDPDKHYLMYEHERVPIAVCEKEPSSIIAFALSCKEYRNALEELSKATQWNSAEEGLPTNSTSDSRPKSSSPIRLPEMSGGQTNRTTETEPQPTKKASGMLSFFRGTAGKSPDLSSQKRETLRGADSAYYQVGQTGKEGTENQGVEPQDEVDGGDTQKKQLINPHVELQFSDANAKFYCRLYYAGEFHKMREVILDSSEEDFIRSLSHSSPWQARGGKSGAAFYATEDDRFILKQMPRLEVQSFLDFAPHYFNYITNAVQQKRPTALAKILGVYRIGYKNSQNNTEKKLDLLVMENLFYGRKMAQVFDLKGSLRNRNVKTDTGKESCDVVLLDENLLKMVRDNPLYIRSHSKAVLRTSIHSDSHFLSSHLIIDYSLLVGRDDTSNELVVGIIDYIRTFTWDKKLEMVVKSTGILGGQGKMPTVVSPELYRTRFCEAMDKYFLMVPDHWTGLGLNC.

The segment at M1–A45 is disordered. An N-acetylalanine modification is found at A2. S23 and S48 each carry phosphoserine; by autocatalysis. The interval K57 to R123 is disordered. Positions E66–S88 are enriched in polar residues. Phosphoserine is present on S88. The segment at D158 to L218 adopts an FYVE-type zinc-finger fold. Zn(2+)-binding residues include C164, C167, C180, C183, C188, C191, C210, and C213. The interval V292–S329 is disordered. 3 positions are modified to phosphoserine: S299, S307, and S312. A compositionally biased stretch (polar residues) spans R302–R315. S318 carries the phosphoserine; by PKB/AKT1 or PKB/AKT2 modification. At S329 the chain carries Phosphoserine. One can recognise a DEP domain in the interval H365–Q440. A compositionally biased stretch (polar residues) spans T442–E459. Residues T442–D469 form a disordered region. The span at G460–D469 shows a compositional bias: basic and acidic residues. S475 is modified (phosphoserine). The interval G484–S505 is disordered. The span at L488–S505 shows a compositional bias: polar residues. Positions M616 to L868 are chaperonin-like domain. Disordered regions lie at residues R1161–D1191 and F1512–S1616. Positions S1177 to S1186 are enriched in low complexity. S1522 carries the post-translational modification Phosphoserine; by autocatalysis. S1544 and S1549 each carry phosphoserine. Positions L1562–L1578 are enriched in low complexity. S1669 carries the post-translational modification Phosphoserine; by autocatalysis. Residues Q1692 to T1799 form a disordered region. Positions S1704 to S1714 are enriched in low complexity. Over residues G1723–Q1735 the composition is skewed to polar residues. Position 1754 is a phosphoserine (S1754). Residues S1758 to F2084 form the PIPK domain. Residues E1842–C2098 form a catalytic region. Phosphoserine; by autocatalysis occurs at positions 1969 and 2053.

As to quaternary structure, component of the PI(3,5)P2 regulatory complex/PAS complex, at least composed of PIKFYVE, FIG4 and VAC14. VAC14 nucleates the assembly of the complex and serves as a scaffold by pentamerizing into a star-shaped structure, which can bind a single copy each of PIKFYVE and FIG4 and coordinates their activities. Interacts (via chaperonin-like domain) with RABEPK; the interaction recruits RABEPK to the endosomal membrane. Interacts with SPAG9. Interacts with EGFR. Post-translationally, autophosphorylates which inhibits its own phosphatidylinositol 3-phosphate 5-kinase activity, stimulates FIG4 lipid phosphatase activity and down-regulates lipid product formation. Dephosphorylated by FIG4 in the PI(3,5)P2 regulatory complex, at Ser-48, Ser-1669 and Ser-2053. Phosphorylated in response to insulin at Ser-318 in a protein kinase B (PKB)-dependent manner.

The protein resides in the endosome membrane. Its subcellular location is the early endosome membrane. It localises to the cytoplasmic vesicle. It is found in the phagosome membrane. The protein localises to the late endosome membrane. It carries out the reaction a 1,2-diacyl-sn-glycero-3-phospho-(1D-myo-inositol-3-phosphate) + ATP = a 1,2-diacyl-sn-glycero-3-phospho-(1D-myo-inositol-3,5-bisphosphate) + ADP + H(+). The catalysed reaction is a 1,2-diacyl-sn-glycero-3-phospho-(1D-myo-inositol) + ATP = a 1,2-diacyl-sn-glycero-3-phospho-(1D-myo-inositol-5-phosphate) + ADP + H(+). The enzyme catalyses L-seryl-[protein] + ATP = O-phospho-L-seryl-[protein] + ADP + H(+). Its activity is regulated as follows. Inhibited by apilimod and YM201636. In terms of biological role, dual specificity kinase implicated in myriad essential cellular processes such as maintenance of endomembrane homeostasis, and endocytic-vacuolar pathway, lysosomal trafficking, nuclear transport, stress- or hormone-induced signaling and cell cycle progression. The PI(3,5)P2 regulatory complex regulates both the synthesis and turnover of phosphatidylinositol 3,5-bisphosphate (PtdIns(3,5)P2). Sole enzyme to catalyze the phosphorylation of phosphatidylinositol 3-phosphate on the fifth hydroxyl of the myo-inositol ring, to form (PtdIns(3,5)P2). Also catalyzes the phosphorylation of phosphatidylinositol on the fifth hydroxyl of the myo-inositol ring, to form phosphatidylinositol 5-phosphate (PtdIns(5)P). Has serine-protein kinase activity and is able to autophosphorylate and transphosphorylate. Autophosphorylation inhibits its own phosphatidylinositol 3-phosphate 5-kinase activity, stimulates FIG4 lipid phosphatase activity and down-regulates lipid product formation. Involved in key endosome operations such as fission and fusion in the course of endosomal cargo transport. Required for the maturation of early into late endosomes, phagosomes and lysosomes. Regulates vacuole maturation and nutrient recovery following engulfment of macromolecules, initiates the redistribution of accumulated lysosomal contents back into the endosome network. Critical regulator of the morphology, degradative activity, and protein turnover of the endolysosomal system in macrophages and platelets. In neutrophils, critical to perform chemotaxis, generate ROS, and undertake phagosome fusion with lysosomes. Plays a key role in the processing and presentation of antigens by major histocompatibility complex class II (MHC class II) mediated by CTSS. Regulates melanosome biogenesis by controlling the delivery of proteins from the endosomal compartment to the melanosome. Essential for systemic glucose homeostasis, mediates insulin-induced signals for endosome/actin remodeling in the course of GLUT4 translocation/glucose uptake activation. Supports microtubule-based endosome-to-trans-Golgi network cargo transport, through association with SPAG9 and RABEPK. Mediates EGFR trafficking to the nucleus. (Microbial infection) Required for cell entry of coronaviruses SARS-CoV and SARS-CoV-2, as well as human coronavirus EMC (HCoV-EMC) by endocytosis. This chain is 1-phosphatidylinositol 3-phosphate 5-kinase, found in Homo sapiens (Human).